We begin with the raw amino-acid sequence, 330 residues long: G-protein coupled receptor 74 (330 aa).

The next 7 membrane-spanning stretches (helical) occupy residues 50–70, 85–105, 121–141, 160–180, 210–230, 252–272, and 295–315; these read LIVVPCLVILLVFCLIGNLWL, FILILMCLNSFWGCLCMIFSI, MVVFWVYVFFDMFLICWLCFD, WVFCTVALIILAFILSMQKAL, VAVSVNVLGFLLPLLFLCIFY, MLLFVFMFLLTWGPYYILSFI, and LPLLGLWGMAHGGLQVFIYIL. Residues Cys117 and Cys195 are joined by a disulfide bond.

Belongs to the G-protein coupled receptor 1 family.

Its subcellular location is the host membrane. The protein is G-protein coupled receptor 74 (74) of Equus caballus (Horse).